Consider the following 60-residue polypeptide: Large ribosomal subunit protein bL32 (60 aa).

Positions 1–16 are enriched in basic residues; it reads MAVPKRKTSPSKRGMR. Residues 1–60 are disordered; that stretch reads MAVPKRKTSPSKRGMRRSADALKAPTYVEDKNSGELRRPHHVDLKTGMYRGRQVLEPKEA. The segment covering 28-44 has biased composition (basic and acidic residues); that stretch reads VEDKNSGELRRPHHVDL.

It belongs to the bacterial ribosomal protein bL32 family.

This chain is Large ribosomal subunit protein bL32, found in Chelativorans sp. (strain BNC1).